The following is a 438-amino-acid chain: Ribosomal protein uS12 methylthiotransferase RimO (438 aa).

The region spanning 1 to 116 (MNVGFISLGC…IWKEIENLLD (116 aa)) is the MTTase N-terminal domain. Residues Cys10, Cys46, Cys79, Cys147, Cys151, and Cys154 each contribute to the [4Fe-4S] cluster site. The region spanning 133-363 (TTGSNMAYLK…MALQEKISRE (231 aa)) is the Radical SAM core domain. The TRAM domain maps to 366 to 435 (EQKVGNVYKV…DYDLFGELYT (70 aa)).

This sequence belongs to the methylthiotransferase family. RimO subfamily. The cofactor is [4Fe-4S] cluster.

It localises to the cytoplasm. It carries out the reaction L-aspartate(89)-[ribosomal protein uS12]-hydrogen + (sulfur carrier)-SH + AH2 + 2 S-adenosyl-L-methionine = 3-methylsulfanyl-L-aspartate(89)-[ribosomal protein uS12]-hydrogen + (sulfur carrier)-H + 5'-deoxyadenosine + L-methionine + A + S-adenosyl-L-homocysteine + 2 H(+). Functionally, catalyzes the methylthiolation of an aspartic acid residue of ribosomal protein uS12. The sequence is that of Ribosomal protein uS12 methylthiotransferase RimO from Alkaliphilus oremlandii (strain OhILAs) (Clostridium oremlandii (strain OhILAs)).